We begin with the raw amino-acid sequence, 504 residues long: Cytochrome P450 monooxygenase iccC (504 aa).

The helical transmembrane segment at 7–26 (LPWILLYTGFLAIFLSRLFS) threads the bilayer. 4 N-linked (GlcNAc...) asparagine glycosylation sites follow: N134, N312, N365, and N374. C452 contacts heme. N494 carries N-linked (GlcNAc...) asparagine glycosylation.

This sequence belongs to the cytochrome P450 family. Heme serves as cofactor.

Its subcellular location is the membrane. It catalyses the reaction (3E,5S)-3-[(2E,4E,8S,10E,12Z)-1-hydroxy-4,8-dimethyltetradeca-2,4,10,12-tetraen-1-ylidene]-5-[(4-hydroxyphenyl)methyl]pyrrolidine-2,4-dione + reduced [NADPH--hemoprotein reductase] + O2 = 3-[(2E,4E,8S,10E,12Z)-4,8-dimethyltetradeca-2,4,10,12-tetraenoyl]-4-hydroxy-5-(4-hydroxyphenyl)-1,2-dihydropyridin-2-one + oxidized [NADPH--hemoprotein reductase] + 2 H2O. The protein operates within mycotoxin biosynthesis. Cytochrome P450 monooxygenase; part of the gene cluster that mediates the biosynthesis of ilicicolin H, a 4-hydroxy-2-pyridonealkaloid that has potent and broad antifungal activities by inhibiting the mitochondrial respiration chain. IccC catalyzes the ring expansion of the tetramate intermediate to the acyclic 2-pyridone intermediate that contains the trans bis-diene chain. The biosynthesis of ilicicolin H starts with formation of the tetramic acid by the hybrid PKS-NRPS synthetase iccA with the partnering trans-enoyl reductase iccB since iccA lacks a designated enoylreductase (ER) domain. The cytochrome P450 monooxygenase iccC then catalyzes the ring expansion of the tetramate to the acyclic 2-pyridone. The pericyclase iccD further converts the acyclic 2-pyridone into 8-epi-ilicicolin H. Finally, the epimerase iccE converts 8-epi-ilicicolin H into ilicicolin H via epimerization. IccA to iccE are sufficient for ilicicolin H biosynthesis and the roles of the remaining enzymes, iccF, iccG and iccH within the pathway have still to be determined. The chain is Cytochrome P450 monooxygenase iccC from Talaromyces variabilis (Penicillium variabile).